Consider the following 1033-residue polypeptide: MAVAPPLPPAPARQLRRWKGSSPRPPPWLSSPFRRTRYLSRPAFAAGGRQDYSPSSGMGVSKTGAFRLGLYGNLNVQSSVQEWVDETKRLFFLRTTNSVRNNITNGTTPLRVGNLRHDPSEDIRSSNYPSLYNQRERGPSNSIVNRHVDTDLAKHRVMYQSAHAVPAPFSVVNNDIKPLNMLDGSKEEIPWHDSVTMESSLPKVSKSEKTLVVDKAIPDKKEHKRITRKVTPNFPDKASLSTESKNARKLLATIYDKVLVVDNVESARSVVKLLTTKYKGFIHACDTEVANIDVKEETPVGHGEVICFSICSGNSDGEADFGNGKTCIWVDVLDGGRDVLMEFAPFFEDPFIKKVWHNYSFDIHVIENCGIKVAGFHADTMHLARLWDSSRRTDGGYSLEGLTNDYRVMDAVLKDIPKTGKVSMKTIFGRKKVRKDGSEGKTISIEPVEKLQREDRELWICYSSLDSMSTLKLYESLKNKLEAKEWIFDDCPRGTMYDFYEEYWRPFGALLVKMETEGVLVDRAYLSEIEKAAVTERELAADKFRKWASKHCPDAKYMNVNSDNQIRQLFFGGIENRNKRGETWPQSKTFKVPNDEGIATEGKKTPKSRTIKLFTIVEDLKIDMFTPTGWPSVSGDVLRSLAGKIPTDHIYKIDDGQEFDEDGSSLELPEQDIEDTSPYGTAYEAFGGGKKGREACHAIAALCEVFSIDKLISGFIVPLQGDRISCKEGRIHCSLNINTETGRLSARTPNLQNQPALEKDRYKIRHAFVAAPGNTLIVADYGQLELRILAHLTNCKSMLEAFKAGGDFHSRTAMNMYQHVRDAVEEKKVLLEWHPQPGQDKPPVPLLKDAFGAERRKAKMLNFSIAYGKTAVGLSWDWKVSVREARDTLKLWYRDRKEVSAWQKKQKAFALEKCEVYTLLGRSRQFPNMTHAGPGQKGHVERAAINAPVQGSAADVAMCAMLEIERNARLKELGWRLLLQVHDEVILEGPTESAEEAKTIVVECMSKPFYGTNILKVDLAVDAKYAKSWYAAK.

The span at 1–11 (MAVAPPLPPAP) shows a compositional bias: pro residues. Disordered stretches follow at residues 1–32 (MAVA…LSSP) and 104–142 (TNGT…PSNS). The N-terminal 55 residues, 1–55 (MAVAPPLPPAPARQLRRWKGSSPRPPPWLSSPFRRTRYLSRPAFAAGGRQDYSPS), are a transit peptide targeting the chloroplast. The span at 115–124 (LRHDPSEDIR) shows a compositional bias: basic and acidic residues. Polar residues predominate over residues 125–142 (SSNYPSLYNQRERGPSNS). One can recognise a 3'-5' exonuclease domain in the interval 321–482 (FGNGKTCIWV…LYESLKNKLE (162 aa)). The tract at residues 696–1030 (CHAIAALCEV…VDAKYAKSWY (335 aa)) is polymerase.

This sequence belongs to the DNA polymerase type-A family. Expressed in shoot apical meristem, root apical meristem, leaf primordia and the marginal meristem.

Its subcellular location is the plastid. The protein localises to the chloroplast. It carries out the reaction DNA(n) + a 2'-deoxyribonucleoside 5'-triphosphate = DNA(n+1) + diphosphate. Inhibited by dideoxythymidine-triphosphate (ddTTP), but not by aphidicolin and N-ethylmaleimide. In terms of biological role, in addition to polymerase activity, this DNA polymerase exhibits 5'-3' exonuclease activity. May be required for DNA replication and accumulation in plastids. The sequence is that of DNA polymerase I A, chloroplastic from Oryza sativa subsp. japonica (Rice).